A 226-amino-acid polypeptide reads, in one-letter code: ATP synthase F(0) complex subunit a (226 aa).

Transmembrane regions (helical) follow at residues 12–32 (PTMM…ILFP), 68–88 (WTLM…LGLL), 97–117 (QLSM…VTGF), 138–158 (IPML…ALAV), 164–184 (ITAG…LMSI), and 189–209 (ASIT…VALI).

The protein belongs to the ATPase A chain family. Component of the ATP synthase complex composed at least of ATP5F1A/subunit alpha, ATP5F1B/subunit beta, ATP5MC1/subunit c (homooctomer), MT-ATP6/subunit a, MT-ATP8/subunit 8, ATP5ME/subunit e, ATP5MF/subunit f, ATP5MG/subunit g, ATP5MK/subunit k, ATP5MJ/subunit j, ATP5F1C/subunit gamma, ATP5F1D/subunit delta, ATP5F1E/subunit epsilon, ATP5PF/subunit F6, ATP5PB/subunit b, ATP5PD/subunit d, ATP5PO/subunit OSCP. ATP synthase complex consists of a soluble F(1) head domain (subunits alpha(3) and beta(3)) - the catalytic core - and a membrane F(0) domain - the membrane proton channel (subunits c, a, 8, e, f, g, k and j). These two domains are linked by a central stalk (subunits gamma, delta, and epsilon) rotating inside the F1 region and a stationary peripheral stalk (subunits F6, b, d, and OSCP). Interacts with DNAJC30; interaction is direct.

Its subcellular location is the mitochondrion inner membrane. It carries out the reaction H(+)(in) = H(+)(out). In terms of biological role, subunit a, of the mitochondrial membrane ATP synthase complex (F(1)F(0) ATP synthase or Complex V) that produces ATP from ADP in the presence of a proton gradient across the membrane which is generated by electron transport complexes of the respiratory chain. ATP synthase complex consist of a soluble F(1) head domain - the catalytic core - and a membrane F(1) domain - the membrane proton channel. These two domains are linked by a central stalk rotating inside the F(1) region and a stationary peripheral stalk. During catalysis, ATP synthesis in the catalytic domain of F(1) is coupled via a rotary mechanism of the central stalk subunits to proton translocation. With the subunit c (ATP5MC1), forms the proton-conducting channel in the F(0) domain, that contains two crucial half-channels (inlet and outlet) that facilitate proton movement from the mitochondrial intermembrane space (IMS) into the matrix. Protons are taken up via the inlet half-channel and released through the outlet half-channel, following a Grotthuss mechanism. The polypeptide is ATP synthase F(0) complex subunit a (Dasypus novemcinctus (Nine-banded armadillo)).